The primary structure comprises 510 residues: Chromosomal replication initiator protein DnaA (510 aa).

The interval 1–107 (MTNDPGSGFA…VRIAPPPADD (107 aa)) is domain I, interacts with DnaA modulators. Residues 107–169 (DDDDSVAAAV…ADTSASADGT (63 aa)) are domain II. Residues 119-168 (PGLEASPETSQEVSDEIDDFGENAPKSRQSWPTHFKKRSTDADTSASADG) form a disordered region. A domain III, AAA+ region region spans residues 170–386 (SLNRRYTFDT…GALIRVTAFA (217 aa)). ATP-binding residues include glycine 214, glycine 216, lysine 217, and threonine 218. The interval 387–510 (SLNKTPIDKA…TTRIRQRSKR (124 aa)) is domain IV, binds dsDNA.

The protein belongs to the DnaA family. Oligomerizes as a right-handed, spiral filament on DNA at oriC.

Its subcellular location is the cytoplasm. In terms of biological role, plays an essential role in the initiation and regulation of chromosomal replication. ATP-DnaA binds to the origin of replication (oriC) to initiate formation of the DNA replication initiation complex once per cell cycle. Binds the DnaA box (a 9 base pair repeat at the origin) and separates the double-stranded (ds)DNA. Forms a right-handed helical filament on oriC DNA; dsDNA binds to the exterior of the filament while single-stranded (ss)DNA is stabiized in the filament's interior. The ATP-DnaA-oriC complex binds and stabilizes one strand of the AT-rich DNA unwinding element (DUE), permitting loading of DNA polymerase. After initiation quickly degrades to an ADP-DnaA complex that is not apt for DNA replication. Binds acidic phospholipids. The polypeptide is Chromosomal replication initiator protein DnaA (Mycobacterium ulcerans (strain Agy99)).